A 296-amino-acid polypeptide reads, in one-letter code: Bifunctional protein FolD (296 aa).

Residues Gly-170 to Ser-172 and Ser-195 each bind NADP(+).

The protein belongs to the tetrahydrofolate dehydrogenase/cyclohydrolase family. In terms of assembly, homodimer.

It carries out the reaction (6R)-5,10-methylene-5,6,7,8-tetrahydrofolate + NADP(+) = (6R)-5,10-methenyltetrahydrofolate + NADPH. The enzyme catalyses (6R)-5,10-methenyltetrahydrofolate + H2O = (6R)-10-formyltetrahydrofolate + H(+). Its pathway is one-carbon metabolism; tetrahydrofolate interconversion. Its function is as follows. Catalyzes the oxidation of 5,10-methylenetetrahydrofolate to 5,10-methenyltetrahydrofolate and then the hydrolysis of 5,10-methenyltetrahydrofolate to 10-formyltetrahydrofolate. This is Bifunctional protein FolD from Rhodospirillum rubrum (strain ATCC 11170 / ATH 1.1.1 / DSM 467 / LMG 4362 / NCIMB 8255 / S1).